Here is a 160-residue protein sequence, read N- to C-terminus: Transcription elongation factor GreA (160 aa).

Positions 14–76 form a coiled coil; sequence VKKLEEELEY…QLENMLKNAS (63 aa).

The protein belongs to the GreA/GreB family.

Functionally, necessary for efficient RNA polymerase transcription elongation past template-encoded arresting sites. The arresting sites in DNA have the property of trapping a certain fraction of elongating RNA polymerases that pass through, resulting in locked ternary complexes. Cleavage of the nascent transcript by cleavage factors such as GreA or GreB allows the resumption of elongation from the new 3'terminus. GreA releases sequences of 2 to 3 nucleotides. The protein is Transcription elongation factor GreA of Clostridium botulinum (strain Okra / Type B1).